Here is a 245-residue protein sequence, read N- to C-terminus: Thiopurine S-methyltransferase (245 aa).

29–40 serves as a coordination point for S-adenosyl-L-methionine; the sequence is WQEKWVSRRIGF. Phe40 contributes to the substrate binding site. Lys58 carries the post-translational modification N6-acetyllysine. The S-adenosyl-L-methionine site is built by Leu69, Glu90, and Arg152.

Belongs to the class I-like SAM-binding methyltransferase superfamily. TPMT family. In terms of assembly, monomer.

Its subcellular location is the cytoplasm. The catalysed reaction is S-adenosyl-L-methionine + a thiopurine = S-adenosyl-L-homocysteine + a thiopurine S-methylether.. The protein is Thiopurine S-methyltransferase (TPMT) of Lycaon pictus (African wild dog).